Reading from the N-terminus, the 185-residue chain is UPF0301 protein IL2218 (185 aa).

The protein belongs to the UPF0301 (AlgH) family.

The chain is UPF0301 protein IL2218 from Idiomarina loihiensis (strain ATCC BAA-735 / DSM 15497 / L2-TR).